Reading from the N-terminus, the 685-residue chain is MESTTAFSEVTSALGIENVKIMEPFLWMLVLGFVIAFVLAFSVGANDVANSFGTAVGSGVVTLRQACILASIFETVGSVLLGAKVSETIRKGLIDVNTYNTTQELLMAGSISAMFGSAVWQLAASFLKLPISGTHCIVGATIGFSLVAKGQQAIQWYELLRIVLSWFISPLLSGIMSALLFYFVRMFILRKADPVPNGLRALPIFYACTIGVNLFSIMYSGAPLLGFDKIPLWGIILISVGCAVLCALVVWFFVCPRMKRKIECEFKSSPSESPLMDKKNRELRCPILKPDPEDIKLPVDGGIVAEVKVPILDMVSVSRTEERTVTFKMGDCDDAVEKEKLNSMETNIDQPMNGSVQLPNGNHVQFSQTVSNQMNSSGQYQYHTVHKDSGLYKDLLHKLHLAKVGDCMGDSGDKPLRRNNSYTSYTMAICGMPLDSLRNRDAEARPDEAEKFTVHGADGKKRIRMDSYTSYCNAVADPQMDVEAEEQEEGSIEDVATDRKSSSSSLEERHDQDKPEVSLLFQFLQILTACFGSFAHGGNDVSNAIGPLVALYLVYESGDVTTKAATPIWLLLYGGVGICIGLWVWGRRVIQTMGKDLTPITPSSGFSIELASALTVVIASNVGLPISTTHCKVGSVVSVGWLRSKKAVDWRLFRNIFLAWFVTVPISGLISAAIMAVFKYAILKK.

The next 6 membrane-spanning stretches (helical) occupy residues 25–45 (FLWM…SVGA), 66–86 (ACIL…AKVS), 106–126 (LMAG…AASF), 162–182 (IVLS…LLFY), 201–221 (ALPI…MYSG), and 234–254 (GIIL…WFFV). Residues 482-492 (VEAEEQEEGSI) are compositionally biased toward acidic residues. Positions 482–513 (VEAEEQEEGSIEDVATDRKSSSSSLEERHDQD) are disordered. The segment covering 496–513 (ATDRKSSSSSLEERHDQD) has biased composition (basic and acidic residues). The next 4 membrane-spanning stretches (helical) occupy residues 517 to 537 (VSLL…FAHG), 565 to 585 (ATPI…LWVW), 606 to 626 (FSIE…GLPI), and 656 to 676 (IFLA…AIMA).

Belongs to the inorganic phosphate transporter (PiT) (TC 2.A.20) family.

It is found in the cell membrane. The catalysed reaction is 2 Na(+)(out) + phosphate(out) = 2 Na(+)(in) + phosphate(in). Sodium-phosphate symporter which preferentially transports the monovalent form of phosphate with a stoichiometry of two sodium ions per phosphate ion. The polypeptide is Sodium-dependent phosphate transporter 1 (slc20a1) (Xenopus tropicalis (Western clawed frog)).